Here is an 89-residue protein sequence, read N- to C-terminus: Chromosomal protein MC1a (89 aa).

Protects DNA against thermal denaturation and modulates transcription. The sequence is that of Chromosomal protein MC1a from Methanothrix soehngenii (Methanosaeta concilii).